Here is a 95-residue protein sequence, read N- to C-terminus: Small ribosomal subunit protein bS6 (95 aa).

This sequence belongs to the bacterial ribosomal protein bS6 family.

Its function is as follows. Binds together with bS18 to 16S ribosomal RNA. The chain is Small ribosomal subunit protein bS6 from Oceanobacillus iheyensis (strain DSM 14371 / CIP 107618 / JCM 11309 / KCTC 3954 / HTE831).